A 342-amino-acid chain; its full sequence is Aspartate carbamoyltransferase catalytic subunit (342 aa).

Positions 54 and 55 each coordinate carbamoyl phosphate. Residue Lys82 participates in L-aspartate binding. Carbamoyl phosphate is bound by residues Arg104, His134, and Gln137. L-aspartate contacts are provided by Arg177 and Arg232. Carbamoyl phosphate contacts are provided by Gly277 and Pro278.

Belongs to the aspartate/ornithine carbamoyltransferase superfamily. ATCase family. As to quaternary structure, heterododecamer (2C3:3R2) of six catalytic PyrB chains organized as two trimers (C3), and six regulatory PyrI chains organized as three dimers (R2).

The enzyme catalyses carbamoyl phosphate + L-aspartate = N-carbamoyl-L-aspartate + phosphate + H(+). The protein operates within pyrimidine metabolism; UMP biosynthesis via de novo pathway; (S)-dihydroorotate from bicarbonate: step 2/3. Functionally, catalyzes the condensation of carbamoyl phosphate and aspartate to form carbamoyl aspartate and inorganic phosphate, the committed step in the de novo pyrimidine nucleotide biosynthesis pathway. In Pseudarthrobacter chlorophenolicus (strain ATCC 700700 / DSM 12829 / CIP 107037 / JCM 12360 / KCTC 9906 / NCIMB 13794 / A6) (Arthrobacter chlorophenolicus), this protein is Aspartate carbamoyltransferase catalytic subunit.